The chain runs to 66 residues: Large ribosomal subunit protein uL29 (66 aa).

The protein belongs to the universal ribosomal protein uL29 family.

The chain is Large ribosomal subunit protein uL29 from Bacillus anthracis (strain CDC 684 / NRRL 3495).